The chain runs to 282 residues: PTS system sorbose-specific EIID component (282 aa).

The PTS EIID domain occupies 13-281 (TKITKGDMFK…GIVGYWLGIL (269 aa)). A run of 4 helical transmembrane segments spans residues 135–155 (LGAS…FVAF), 197–217 (GLFI…PLVV), 234–254 (ILDQ…CMYL), and 261–281 (PILL…LGIL).

The protein resides in the cell membrane. Functionally, the phosphoenolpyruvate-dependent sugar phosphotransferase system (PTS), a major carbohydrate active transport system, catalyzes the phosphorylation of incoming sugar substrates concomitant with their translocation across the cell membrane. The enzyme II SorABCD PTS system is involved in L-sorbose transport. This Lacticaseibacillus casei (Lactobacillus casei) protein is PTS system sorbose-specific EIID component.